Reading from the N-terminus, the 256-residue chain is uncharacterized protein (256 aa).

One can recognise an S4 RNA-binding domain in the interval 16–83 (VRLQKILSRA…DSLVYLALNK (68 aa)). Residue aspartate 121 is the Nucleophile of the active site.

It belongs to the pseudouridine synthase RsuA family.

The enzyme catalyses a uridine in RNA = a pseudouridine in RNA. This is an uncharacterized protein from Mycobacterium leprae (strain TN).